The sequence spans 203 residues: RNA pyrophosphohydrolase (203 aa).

The Nudix hydrolase domain occupies 6–149 (GFRPNVGIIL…KRNVYQMALT (144 aa)). The short motif at 38–59 (GGIKHGESPEQAMFRELHEEVG) is the Nudix box element. The disordered stretch occupies residues 170–203 (RAHRRDEGSEHNDHLDPTGPHDAGASVSEPKQAE). Over residues 173–185 (RRDEGSEHNDHLD) the composition is skewed to basic and acidic residues.

The protein belongs to the Nudix hydrolase family. RppH subfamily. Requires a divalent metal cation as cofactor.

In terms of biological role, accelerates the degradation of transcripts by removing pyrophosphate from the 5'-end of triphosphorylated RNA, leading to a more labile monophosphorylated state that can stimulate subsequent ribonuclease cleavage. The polypeptide is RNA pyrophosphohydrolase (Leptothrix cholodnii (strain ATCC 51168 / LMG 8142 / SP-6) (Leptothrix discophora (strain SP-6))).